The following is a 561-amino-acid chain: Melanopsin-A (561 aa).

Residues 1-34 are Extracellular-facing; the sequence is MRPSTDTMEADTAATHRNFITKVDVPDHAHYTVA. The helical transmembrane segment at 35–55 threads the bilayer; the sequence is FFVSVIGTLGVTGNALVQFAF. Over 56–68 the chain is Cytoplasmic; sequence YSNKKLRNLPNYF. The helical transmembrane segment at 69–89 threads the bilayer; sequence IMNQAASDFLMAFTQSPFFFI. Residues 90 to 104 lie on the Extracellular side of the membrane; the sequence is NCLNREWIFGELGCK. Cysteine 103 and cysteine 181 are disulfide-bonded. Residues 105–125 traverse the membrane as a helical segment; the sequence is LYAFLGALFGITSMINLLAIS. The Cytoplasmic segment spans residues 126–148; sequence LDRYMVITRPLEAMKWNSKRRTT. Residues 149-169 traverse the membrane as a helical segment; that stretch reads IAILLVWLYSLAWSLAPLVGW. The Extracellular segment spans residues 170-201; the sequence is SSYIPEGLRTSCTWDYVTYTASNRSYTMMLCC. Asparagine 192 is a glycosylation site (N-linked (GlcNAc...) asparagine). The chain crosses the membrane as a helical span at residues 202–222; the sequence is FVFFIPLAIISYCYLFMFLAI. Residues 223 to 255 are Cytoplasmic-facing; it reads RKTSRDVERLGIQVRKSTIIRQKSIRTEWKLAK. The helical transmembrane segment at 256-276 threads the bilayer; the sequence is IAFVVIVVYVLSWSPYACVTM. The Extracellular segment spans residues 277–291; sequence ISWSGHANILSPYSK. A helical membrane pass occupies residues 292–312; it reads TVPAVIAKASTIYNPFIYAII. The residue at position 299 (lysine 299) is an N6-(retinylidene)lysine. Residues 313–561 are Cytoplasmic-facing; that stretch reads HQKYRKTLAD…EDSLEDNDVV (249 aa). Disordered regions lie at residues 359 to 385, 404 to 448, 479 to 503, and 539 to 561; these read AIRR…SYSS, ASFR…SATH, NGLS…SKSA, and SFTD…NDVV. A compositionally biased stretch (low complexity) spans 371–385; sequence ASASKTAAGASSYSS. Residues 550-561 show a composition bias toward acidic residues; sequence VDEDSLEDNDVV.

The protein belongs to the G-protein coupled receptor 1 family. Opsin subfamily. In terms of tissue distribution, expressed in retina and brain. Expressed in a subset of retinal horizontal cells as well as a small number of amacrine and retinal ganglion cells. Also expressed in a small population of neurons in the suprachiasmatic nucleus (SNC).

Its subcellular location is the cell membrane. In terms of biological role, photoreceptor implicated in non-image-forming responses to light. This is Melanopsin-A (opn4a) from Gadus morhua (Atlantic cod).